The following is a 291-amino-acid chain: Phosphatidylglycerol--prolipoprotein diacylglyceryl transferase (291 aa).

Transmembrane regions (helical) follow at residues 24–44, 64–84, 100–120, and 125–145; these read WYAL…RALL, FILW…VLFY, WNGG…VILF, and GLPI…GLFL. Residue arginine 147 participates in a 1,2-diacyl-sn-glycero-3-phospho-(1'-sn-glycerol) binding. 3 consecutive transmembrane segments (helical) span residues 187–207, 211–231, and 247–267; these read AALE…LGAL, GLVL…AEFF, and MGML…YAAW.

The protein belongs to the Lgt family.

Its subcellular location is the cell inner membrane. It carries out the reaction L-cysteinyl-[prolipoprotein] + a 1,2-diacyl-sn-glycero-3-phospho-(1'-sn-glycerol) = an S-1,2-diacyl-sn-glyceryl-L-cysteinyl-[prolipoprotein] + sn-glycerol 1-phosphate + H(+). It functions in the pathway protein modification; lipoprotein biosynthesis (diacylglyceryl transfer). Catalyzes the transfer of the diacylglyceryl group from phosphatidylglycerol to the sulfhydryl group of the N-terminal cysteine of a prolipoprotein, the first step in the formation of mature lipoproteins. The protein is Phosphatidylglycerol--prolipoprotein diacylglyceryl transferase of Nitrobacter winogradskyi (strain ATCC 25391 / DSM 10237 / CIP 104748 / NCIMB 11846 / Nb-255).